Here is an 875-residue protein sequence, read N- to C-terminus: GATOR2 complex protein MIOS (875 aa).

7 WD repeats span residues 58–100 (SDTP…NSKF), 111–155 (KHAR…TPDI), 182–221 (GQND…QKMF), 223–261 (NTKA…KPVL), 265–306 (EQPK…TPIG), 320–360 (PCDN…SLAW), and 395–437 (RLRA…KQYT). A C4-type zinc finger spans residues 735-781 (VSCNFCGKSISYSCSSVPHQGRGFSQYGVSGSPTKSKVTSCPGCRKP). Positions 737 and 740 each coordinate Zn(2+). S759 and S766 each carry phosphoserine. Zn(2+)-binding residues include C775, C778, C788, C827, C830, H832, H835, H838, C849, C854, and C858. The RING-type; atypical zinc finger occupies 782–863 (LPRCALCLIN…CTCKCMQLDT (82 aa)).

The protein belongs to the WD repeat mio family. Component of the GATOR2 subcomplex, composed of MIOS, SEC13, SEH1L, WDR24 and WDR59. The GATOR2 complex interacts with CASTOR1 and CASTOR2; the interaction is negatively regulated by arginine. CASTOR1 and CASTOR2 convey leucine availability via direct interaction with MIOS. The GATOR2 complex interacts with SESN1, SESN2 and SESN3; the interaction is negatively regulated by amino acids. Interacts with SAR1A and SAR1B; the interaction is direct, disrupted by leucine and mediates the interaction of SAR1A or SAR1B with the GATOR2 complex to negatively regulate the TORC1 signaling upon leucine deprivation. As to expression, widely expressed. In brain, expressed in neurons and glia (oligodendrocytes and astrocytes), with more abundance in neurons.

It is found in the lysosome membrane. Its activity is regulated as follows. The GATOR2 complex is negatively regulated by the upstream amino acid sensors CASTOR1 and SESN2, which sequester the GATOR2 complex in absence of amino acids. In the presence of abundant amino acids, GATOR2 is released from CASTOR1 and SESN2 and activated. Functionally, as a component of the GATOR2 complex, functions as an activator of the amino acid-sensing branch of the mTORC1 signaling pathway. The GATOR2 complex indirectly activates mTORC1 through the inhibition of the GATOR1 subcomplex. GATOR2 probably acts as an E3 ubiquitin-protein ligase toward GATOR1. In the presence of abundant amino acids, the GATOR2 complex mediates ubiquitination of the NPRL2 core component of the GATOR1 complex, leading to GATOR1 inactivation. In the absence of amino acids, GATOR2 is inhibited, activating the GATOR1 complex. Within the GATOR2 complex, MIOS is required to prevent autoubiquitination of WDR24, the catalytic subunit of the complex. The GATOR2 complex is required for brain myelination. The protein is GATOR2 complex protein MIOS of Mus musculus (Mouse).